The chain runs to 274 residues: Dermonecrotic toxin SdSicTox-betaIIB2i (274 aa).

H5 is an active-site residue. Residues E25 and D27 each coordinate Mg(2+). Catalysis depends on H41, which acts as the Nucleophile. 2 disulfide bridges follow: C45-C51 and C47-C190. D85 provides a ligand contact to Mg(2+).

This sequence belongs to the arthropod phospholipase D family. Class II subfamily. The cofactor is Mg(2+). Expressed by the venom gland.

It is found in the secreted. The catalysed reaction is an N-(acyl)-sphingosylphosphocholine = an N-(acyl)-sphingosyl-1,3-cyclic phosphate + choline. It catalyses the reaction an N-(acyl)-sphingosylphosphoethanolamine = an N-(acyl)-sphingosyl-1,3-cyclic phosphate + ethanolamine. It carries out the reaction a 1-acyl-sn-glycero-3-phosphocholine = a 1-acyl-sn-glycero-2,3-cyclic phosphate + choline. The enzyme catalyses a 1-acyl-sn-glycero-3-phosphoethanolamine = a 1-acyl-sn-glycero-2,3-cyclic phosphate + ethanolamine. Functionally, dermonecrotic toxins cleave the phosphodiester linkage between the phosphate and headgroup of certain phospholipids (sphingolipid and lysolipid substrates), forming an alcohol (often choline) and a cyclic phosphate. This toxin acts on sphingomyelin (SM). It may also act on ceramide phosphoethanolamine (CPE), lysophosphatidylcholine (LPC) and lysophosphatidylethanolamine (LPE), but not on lysophosphatidylserine (LPS), and lysophosphatidylglycerol (LPG). It acts by transphosphatidylation, releasing exclusively cyclic phosphate products as second products. Induces dermonecrosis, hemolysis, increased vascular permeability, edema, inflammatory response, and platelet aggregation. The sequence is that of Dermonecrotic toxin SdSicTox-betaIIB2i from Sicarius cf. damarensis (strain GJB-2008) (Six-eyed sand spider).